A 271-amino-acid polypeptide reads, in one-letter code: NH(3)-dependent NAD(+) synthetase (271 aa).

Residue 43–50 (GISGGQDS) coordinates ATP. Residue aspartate 49 participates in Mg(2+) binding. Arginine 137 contacts deamido-NAD(+). Threonine 157 is an ATP binding site. Position 162 (glutamate 162) interacts with Mg(2+). The deamido-NAD(+) site is built by lysine 170 and aspartate 177. Lysine 186 and threonine 208 together coordinate ATP. 257–258 (HK) contributes to the deamido-NAD(+) binding site.

This sequence belongs to the NAD synthetase family. In terms of assembly, homodimer.

The enzyme catalyses deamido-NAD(+) + NH4(+) + ATP = AMP + diphosphate + NAD(+) + H(+). It participates in cofactor biosynthesis; NAD(+) biosynthesis; NAD(+) from deamido-NAD(+) (ammonia route): step 1/1. Its function is as follows. Catalyzes the ATP-dependent amidation of deamido-NAD to form NAD. Uses ammonia as a nitrogen source. The polypeptide is NH(3)-dependent NAD(+) synthetase (Exiguobacterium sibiricum (strain DSM 17290 / CCUG 55495 / CIP 109462 / JCM 13490 / 255-15)).